Consider the following 177-residue polypeptide: RNA polymerase sigma-E factor (177 aa).

Residues 34–47 carry the Polymerase core binding motif; it reads DLLQTALARTYGRW. Positions 128-147 form a DNA-binding region, H-T-H motif; it reads TEETAAALGMSAGTVKSTLH.

Belongs to the sigma-70 factor family. ECF subfamily.

It localises to the cytoplasm. Its function is as follows. Sigma factors are initiation factors that promote the attachment of RNA polymerase to specific initiation sites and are then released. This sigma factor is required for normal cell wall integrity; it is recruited by RNA polymerase to transcribe genes with cell wall-related functions. It is also involved in the transcription of the dagA gene coding for an extracellular agar-degrading enzyme. The chain is RNA polymerase sigma-E factor (sigE) from Streptomyces coelicolor (strain ATCC BAA-471 / A3(2) / M145).